Consider the following 473-residue polypeptide: Photosystem II CP43 reaction center protein (473 aa).

The propeptide occupies 1 to 14; the sequence is MKTLYSLRRFYHVE. Threonine 15 carries the post-translational modification N-acetylthreonine. Threonine 15 carries the post-translational modification Phosphothreonine. The next 5 membrane-spanning stretches (helical) occupy residues 69 to 93, 134 to 155, 178 to 200, 255 to 275, and 291 to 312; these read LFEV…PHLA, LLGP…KDRN, KALY…RKIT, KPFA…LSYS, and WFNN…ASQA. Glutamate 367 contributes to the [CaMn4O5] cluster binding site. The chain crosses the membrane as a helical span at residues 447–471; sequence RARAAAAGFEKGIDRDFEPVLFMTP.

It belongs to the PsbB/PsbC family. PsbC subfamily. As to quaternary structure, PSII is composed of 1 copy each of membrane proteins PsbA, PsbB, PsbC, PsbD, PsbE, PsbF, PsbH, PsbI, PsbJ, PsbK, PsbL, PsbM, PsbT, PsbX, PsbY, PsbZ, Psb30/Ycf12, at least 3 peripheral proteins of the oxygen-evolving complex and a large number of cofactors. It forms dimeric complexes. It depends on Binds multiple chlorophylls and provides some of the ligands for the Ca-4Mn-5O cluster of the oxygen-evolving complex. It may also provide a ligand for a Cl- that is required for oxygen evolution. PSII binds additional chlorophylls, carotenoids and specific lipids. as a cofactor.

The protein resides in the plastid. It localises to the chloroplast thylakoid membrane. In terms of biological role, one of the components of the core complex of photosystem II (PSII). It binds chlorophyll and helps catalyze the primary light-induced photochemical processes of PSII. PSII is a light-driven water:plastoquinone oxidoreductase, using light energy to abstract electrons from H(2)O, generating O(2) and a proton gradient subsequently used for ATP formation. This chain is Photosystem II CP43 reaction center protein, found in Solanum tuberosum (Potato).